The chain runs to 47 residues: Large ribosomal subunit protein bL33C (47 aa).

It belongs to the bacterial ribosomal protein bL33 family.

In Staphylococcus epidermidis (strain ATCC 35984 / DSM 28319 / BCRC 17069 / CCUG 31568 / BM 3577 / RP62A), this protein is Large ribosomal subunit protein bL33C.